We begin with the raw amino-acid sequence, 455 residues long: Differentiation-associated protein 1 (455 aa).

The N-terminal stretch at 1-21 (MKFKLFLLVFFVFLLPYLSQS) is a signal peptide. The disordered stretch occupies residues 349 to 434 (IGSSSSSSSS…SDDDLGNPSS (86 aa)). Positions 351–423 (SSSSSSSSSS…KSNHTSSESS (73 aa)) are enriched in low complexity. S433 is lipidated: GPI-like-anchor amidated serine. Positions 434 to 455 (SSSILSVSKLIILLISIILYCF) are cleaved as a propeptide — removed in mature form.

It localises to the cell membrane. In terms of biological role, plays a role in differentiation. This Dictyostelium discoideum (Social amoeba) protein is Differentiation-associated protein 1 (dia1).